Reading from the N-terminus, the 464-residue chain is Argininosuccinate lyase (464 aa).

Belongs to the lyase 1 family. Argininosuccinate lyase subfamily.

It localises to the cytoplasm. The catalysed reaction is 2-(N(omega)-L-arginino)succinate = fumarate + L-arginine. Its pathway is amino-acid biosynthesis; L-arginine biosynthesis; L-arginine from L-ornithine and carbamoyl phosphate: step 3/3. The chain is Argininosuccinate lyase from Pseudomonas putida (strain GB-1).